Consider the following 30-residue polypeptide: Trypsin inhibitor 2 (30 aa).

Cystine bridges form between cysteine 3/cysteine 20, cysteine 10/cysteine 22, and cysteine 16/cysteine 29.

Belongs to the protease inhibitor I7 (squash-type serine protease inhibitor) family.

It localises to the secreted. Functionally, inhibits trypsin. This Luffa aegyptiaca (Sponge gourd) protein is Trypsin inhibitor 2.